A 441-amino-acid polypeptide reads, in one-letter code: Gamma-glutamyl phosphate reductase (441 aa).

It belongs to the gamma-glutamyl phosphate reductase family.

It localises to the cytoplasm. It catalyses the reaction L-glutamate 5-semialdehyde + phosphate + NADP(+) = L-glutamyl 5-phosphate + NADPH + H(+). Its pathway is amino-acid biosynthesis; L-proline biosynthesis; L-glutamate 5-semialdehyde from L-glutamate: step 2/2. Its function is as follows. Catalyzes the NADPH-dependent reduction of L-glutamate 5-phosphate into L-glutamate 5-semialdehyde and phosphate. The product spontaneously undergoes cyclization to form 1-pyrroline-5-carboxylate. This is Gamma-glutamyl phosphate reductase from Hydrogenobaculum sp. (strain Y04AAS1).